The primary structure comprises 216 residues: Large ribosomal subunit protein bL25 (216 aa).

Residues 184 to 216 are disordered; that stretch reads VPPTSDVEEEEGDEDLEEDVEETAAEEEEGVEE. Over residues 189 to 216 the composition is skewed to acidic residues; the sequence is DVEEEEGDEDLEEDVEETAAEEEEGVEE.

This sequence belongs to the bacterial ribosomal protein bL25 family. CTC subfamily. As to quaternary structure, part of the 50S ribosomal subunit; part of the 5S rRNA/L5/L18/L25 subcomplex. Contacts the 5S rRNA. Binds to the 5S rRNA independently of L5 and L18.

Its function is as follows. This is one of the proteins that binds to the 5S RNA in the ribosome where it forms part of the central protuberance. This Desulforapulum autotrophicum (strain ATCC 43914 / DSM 3382 / VKM B-1955 / HRM2) (Desulfobacterium autotrophicum) protein is Large ribosomal subunit protein bL25.